We begin with the raw amino-acid sequence, 63 residues long: Small ribosomal subunit protein uS14 (63 aa).

Zn(2+) contacts are provided by C26, C29, C42, and C45.

The protein belongs to the universal ribosomal protein uS14 family. Zinc-binding uS14 subfamily. In terms of assembly, part of the 30S ribosomal subunit. Contacts proteins S3 and S10. The cofactor is Zn(2+).

Functionally, binds 16S rRNA, required for the assembly of 30S particles and may also be responsible for determining the conformation of the 16S rRNA at the A site. This chain is Small ribosomal subunit protein uS14, found in Gloeobacter violaceus (strain ATCC 29082 / PCC 7421).